A 308-amino-acid polypeptide reads, in one-letter code: Ribosomal RNA large subunit methyltransferase F (308 aa).

The protein belongs to the methyltransferase superfamily. METTL16/RlmF family.

It is found in the cytoplasm. The enzyme catalyses adenosine(1618) in 23S rRNA + S-adenosyl-L-methionine = N(6)-methyladenosine(1618) in 23S rRNA + S-adenosyl-L-homocysteine + H(+). Functionally, specifically methylates the adenine in position 1618 of 23S rRNA. In Escherichia coli O127:H6 (strain E2348/69 / EPEC), this protein is Ribosomal RNA large subunit methyltransferase F.